We begin with the raw amino-acid sequence, 452 residues long: MIQSPPGSGKSVVISEITKLATEKGGRVLFLVHRKELIDQITNSFKVHGVPLNQVELLTVGKAKNRLSVLRKPTLIITDEGHHGKAATYQKIYEFYADVPRLGFTATPWRMSGDGFKDTYDYMIEGKTVEWLINNKRLAPYQYYSLPSIDISKLRIKNGDYSNQSIDDALGKTIFGDVVQEYVKHANGQKAILYAHSVEASQSFAKEFQEAGIKAVHVDAKTPKNERDKLMLDFRNGRIKVLCNVDLISEGFDVPDCTVTILCRPTKSLVLFLQQSMRSMRYQHRKTAIIIDNVMNWHAHGLPDTHHDWKDYFEGGWKKKGQKNIVQAKQCPDCSAMWPLSQKMCNLCGHDFSIEEKHEKLRLEAELELIEKEKVKLKILSEKKFGSDLKKNWEIAQARAKVNKGNPLMKLLYFYAKSDWASASIEEIAEVTGKSNYQISQAKEWLQSKGIY.

A Helicase ATP-binding domain is found at 1 to 126; sequence MIQSPPGSGK…KDTYDYMIEG (126 aa). Positions 177–333 constitute a Helicase C-terminal domain; sequence DVVQEYVKHA…NIVQAKQCPD (157 aa). A zinc finger spans residues 331 to 348; the sequence is CPDCSAMWPLSQKMCNLC.

In terms of biological role, may play a role in either regulating bacteriophages replication or specifying expression of its own genes. The protein is 51.5 kDa protein of Lactococcus (lactic streptococci).